Consider the following 565-residue polypeptide: Urocanate hydratase (565 aa).

NAD(+) is bound by residues 58-59, Gln136, 182-184, Glu202, Arg207, 245-246, 266-270, 276-277, and Tyr325; these read GG, GMG, NA, QTSAH, and YL. Residue Cys413 is part of the active site. Gly495 is a binding site for NAD(+).

Belongs to the urocanase family. NAD(+) serves as cofactor.

It localises to the cytoplasm. It catalyses the reaction 4-imidazolone-5-propanoate = trans-urocanate + H2O. It participates in amino-acid degradation; L-histidine degradation into L-glutamate; N-formimidoyl-L-glutamate from L-histidine: step 2/3. In terms of biological role, catalyzes the conversion of urocanate to 4-imidazolone-5-propionate. The chain is Urocanate hydratase from Vibrio vulnificus (strain CMCP6).